The primary structure comprises 220 residues: Pyrrolidone-carboxylate peptidase (220 aa).

Active-site residues include E80, C143, and H167.

It belongs to the peptidase C15 family. Homotetramer.

Its subcellular location is the cytoplasm. The catalysed reaction is Release of an N-terminal pyroglutamyl group from a polypeptide, the second amino acid generally not being Pro.. Its function is as follows. Removes 5-oxoproline from various penultimate amino acid residues except L-proline. The protein is Pyrrolidone-carboxylate peptidase (pcp) of Thermococcus litoralis (strain ATCC 51850 / DSM 5473 / JCM 8560 / NS-C).